Here is a 194-residue protein sequence, read N- to C-terminus: MPKRRARVTRKTKETDIAIELVLDGNGKYEIQSGIRFLDHMLESFSKHSRIDIALTCTGDVDVDDHHSIEDIAIVLGSAISQALGDKRGIQRYGWAIIPMDESLARAAIDLSGRSYLFFDAVFDRPTVSDLSTEMVEHFFFSLAEHLKANIHLEILHGKNTHHKVEALFKSLAVAMREAVKITSNEVLSTKGVI.

It belongs to the imidazoleglycerol-phosphate dehydratase family.

It is found in the cytoplasm. It catalyses the reaction D-erythro-1-(imidazol-4-yl)glycerol 3-phosphate = 3-(imidazol-4-yl)-2-oxopropyl phosphate + H2O. The protein operates within amino-acid biosynthesis; L-histidine biosynthesis; L-histidine from 5-phospho-alpha-D-ribose 1-diphosphate: step 6/9. The sequence is that of Imidazoleglycerol-phosphate dehydratase from Chloroherpeton thalassium (strain ATCC 35110 / GB-78).